A 487-amino-acid chain; its full sequence is Protein NEN2 (487 aa).

Positions 18 to 179 constitute an Exonuclease domain; sequence FFDVETTIPF…LDDVRMNFEV (162 aa). Aspartate 20 and glutamate 22 together coordinate Mg(2+). The Proton donor/acceptor role is filled by histidine 167. Aspartate 172 provides a ligand contact to Mg(2+). Disordered stretches follow at residues 200–233 and 269–291; these read NSVTTTTPETSSRRRRTIKKSPLQSPTDQQTGEN and SDVPMEEEQNQQSETVASEGTGD. A compositionally biased stretch (polar residues) spans 221–233; the sequence is PLQSPTDQQTGEN.

Mg(2+) is required as a cofactor. Expressed in the sieve elements and phloem pole pericycle cells.

The protein localises to the cytoplasm. It is found in the nucleus. Functionally, probable exonuclease involved in enuclation of sieve elements. In Arabidopsis thaliana (Mouse-ear cress), this protein is Protein NEN2.